A 332-amino-acid polypeptide reads, in one-letter code: UPF0194 membrane protein YbhG (332 aa).

Residues 1–16 form the signal peptide; sequence MMKKPVVIGLAVVVLA. Positions 108 to 211 form a coiled coil; sequence EEIAQAAAAV…LQDSTLVAPS (104 aa).

This sequence belongs to the UPF0194 family.

The protein localises to the periplasm. The protein is UPF0194 membrane protein YbhG of Escherichia coli O6:H1 (strain CFT073 / ATCC 700928 / UPEC).